A 162-amino-acid chain; its full sequence is Early E1A 18 kDa protein (162 aa).

The disordered stretch occupies residues 134-162; the sequence is EEPTEGVAENSLKRQADSSLCSSSPKRFC. A compositionally biased stretch (polar residues) spans 150 to 162; sequence DSSLCSSSPKRFC.

This is Early E1A 18 kDa protein from Tree shrew adenovirus serotype 1 (TSAdV-1).